A 253-amino-acid chain; its full sequence is Sulfate transporter CysZ (253 aa).

The next 4 helical transmembrane spans lie at 31 to 51, 75 to 95, 151 to 171, and 222 to 242; these read FVIL…WWLF, LLWP…FSTI, IVLL…PVLW, and IPLL…AMWV.

This sequence belongs to the CysZ family.

It is found in the cell inner membrane. In terms of biological role, high affinity, high specificity proton-dependent sulfate transporter, which mediates sulfate uptake. Provides the sulfur source for the cysteine synthesis pathway. This chain is Sulfate transporter CysZ, found in Escherichia coli O8 (strain IAI1).